The primary structure comprises 155 residues: Ribonuclease H (155 aa).

The RNase H type-1 domain occupies 1 to 142 (MLKQVEIFTD…CDELARAAAM (142 aa)). Mg(2+) is bound by residues Asp10, Glu48, Asp70, and Asp134.

The protein belongs to the RNase H family. In terms of assembly, monomer. Mg(2+) is required as a cofactor.

The protein resides in the cytoplasm. The catalysed reaction is Endonucleolytic cleavage to 5'-phosphomonoester.. Its function is as follows. Endonuclease that specifically degrades the RNA of RNA-DNA hybrids. This Escherichia coli O127:H6 (strain E2348/69 / EPEC) protein is Ribonuclease H.